A 181-amino-acid polypeptide reads, in one-letter code: MALILPCTFCTSLQKKNFPINRRYITNFRRGATTATCEFRIPVEVSTPSDRGSLVVPSHKVTVHDRQRGVVHEFEVPEDQYILHSAESQNISLPFACRHGCCTSCAVRVKSGELRQPQALGISAELKSQGYALLCVGFPTSDLEVETQDEDEVYWLQFGRYFARGPIERDDYALELAMGDE.

The transit peptide at 1–44 directs the protein to the chloroplast; sequence MALILPCTFCTSLQKKNFPINRRYITNFRRGATTATCEFRIPVE. The 93-residue stretch at 59–151 folds into the 2Fe-2S ferredoxin-type domain; the sequence is HKVTVHDRQR…DLEVETQDED (93 aa). [2Fe-2S] cluster contacts are provided by cysteine 97, cysteine 102, cysteine 105, and cysteine 135.

The protein belongs to the 2Fe2S plant-type ferredoxin family. [2Fe-2S] cluster serves as cofactor.

Its subcellular location is the plastid. The protein resides in the chloroplast. Functionally, ferredoxins are iron-sulfur proteins that transfer electrons in a wide variety of metabolic reactions. Mediates alternative electron partitioning in conditions of acceptor limitation at photosystem I. The protein is Ferredoxin C 2, chloroplastic of Arabidopsis thaliana (Mouse-ear cress).